The primary structure comprises 607 residues: Elongation factor 4 (607 aa).

The 183-residue stretch at 11–193 (SKIRNFSIIA…QIVEKVPAPT (183 aa)) folds into the tr-type G domain. GTP contacts are provided by residues 23–28 (DHGKST) and 140–143 (NKID).

Belongs to the TRAFAC class translation factor GTPase superfamily. Classic translation factor GTPase family. LepA subfamily.

The protein resides in the cell membrane. It carries out the reaction GTP + H2O = GDP + phosphate + H(+). In terms of biological role, required for accurate and efficient protein synthesis under certain stress conditions. May act as a fidelity factor of the translation reaction, by catalyzing a one-codon backward translocation of tRNAs on improperly translocated ribosomes. Back-translocation proceeds from a post-translocation (POST) complex to a pre-translocation (PRE) complex, thus giving elongation factor G a second chance to translocate the tRNAs correctly. Binds to ribosomes in a GTP-dependent manner. This Bacillus cereus (strain ATCC 10987 / NRS 248) protein is Elongation factor 4.